The chain runs to 291 residues: Elongation factor Ts (291 aa).

Residues threonine 84–valine 87 are involved in Mg(2+) ion dislocation from EF-Tu.

It belongs to the EF-Ts family.

It is found in the cytoplasm. In terms of biological role, associates with the EF-Tu.GDP complex and induces the exchange of GDP to GTP. It remains bound to the aminoacyl-tRNA.EF-Tu.GTP complex up to the GTP hydrolysis stage on the ribosome. This chain is Elongation factor Ts, found in Bifidobacterium adolescentis (strain ATCC 15703 / DSM 20083 / NCTC 11814 / E194a).